A 226-amino-acid polypeptide reads, in one-letter code: MARLLQASCLLSLLLAGFVPQSRGQEKSKMDCHGGISGTIYEYGALTIDGEEYIPFKQYAGKYVLFVNVASYUGLTGQYIELNALQEELAPFGLVILGFPCNQFGKQEPGENSEILPTLKYVRPGGGFVPNFQLFEKGDVNGEKEQKFYTFLKNSCPPTSELLGTSDRLFWEPMKVHDIRWNFEKFLVGPDGIPIMRWHHRTTVSNVKMDILSYMRRQAALGVKRK.

Positions 1-24 (MARLLQASCLLSLLLAGFVPQSRG) are cleaved as a signal peptide. Residue Sec-73 is part of the active site. A non-standard amino acid (selenocysteine) is located at residue Sec-73.

Belongs to the glutathione peroxidase family. As to quaternary structure, homotetramer. In terms of tissue distribution, secreted in plasma.

The protein localises to the secreted. The enzyme catalyses 2 glutathione + H2O2 = glutathione disulfide + 2 H2O. The catalysed reaction is tert-butyl hydroperoxide + 2 glutathione = tert-butanol + glutathione disulfide + H2O. In terms of biological role, protects cells and enzymes from oxidative damage, by catalyzing the reduction of hydrogen peroxide, lipid peroxides and organic hydroperoxide, by glutathione. The protein is Glutathione peroxidase 3 of Pongo pygmaeus (Bornean orangutan).